Here is a 305-residue protein sequence, read N- to C-terminus: Sulfate adenylyltransferase subunit 2 (305 aa).

Belongs to the PAPS reductase family. CysD subfamily. In terms of assembly, heterodimer composed of CysD, the smaller subunit, and CysN.

It carries out the reaction sulfate + ATP + H(+) = adenosine 5'-phosphosulfate + diphosphate. It functions in the pathway sulfur metabolism; hydrogen sulfide biosynthesis; sulfite from sulfate: step 1/3. Functionally, with CysN forms the ATP sulfurylase (ATPS) that catalyzes the adenylation of sulfate producing adenosine 5'-phosphosulfate (APS) and diphosphate, the first enzymatic step in sulfur assimilation pathway. APS synthesis involves the formation of a high-energy phosphoric-sulfuric acid anhydride bond driven by GTP hydrolysis by CysN coupled to ATP hydrolysis by CysD. The chain is Sulfate adenylyltransferase subunit 2 from Pseudomonas fluorescens (strain ATCC BAA-477 / NRRL B-23932 / Pf-5).